A 1435-amino-acid polypeptide reads, in one-letter code: MAPDDESKKRATRKSTKRWKEEHQVATEIPERFREGDDEDEDCTAGHALNKSVFGMIAAASSIVDFNARFDAQSSDEEYDLGKPTRQSSESHINRSSIDQKMGKFEGHRRLLSESKILRSFSRFSSRSKSKSSNTIARGSRTPSPLRESRQEPTSPEIRYSPLQPKDTPVMSRMLEARAELSLRPSFEMPRKSKDPAEVDDERTSPDSLAERLMEIFKFETPEDVLEEYPCWLMKSVLLQGYMYITTKHICFYAYLPKKANEVVKSGYLSKSGRHNPKYNRYWFRLKDDVLSYYTNPSDLYFPSGNIDLRYGISASIVEKEKGKDSTHFTVETHQRKYNFNADSAPSAKEWVKALQKIIFRSHNDGDSVKISLPIENIIDIEDSRIIDFADTCKIRIIDNDETYAIDEYFFSFFTNGKLALSVLKILVGDTAAQKIPEELLSPLSTADDSRGSSKRTSFQVSRDRKLHGPSVQPNAPALEETVRATLSPLLAPGAGSPRASTDMSLSSSDIFRRSLDINKHGRRSIDLNRLTTEHHRSNSANSISTRRSLSTNRLDQEKRTSKQGSSDSYVHSLEEPGSSEALPSASDETQASASQILRGSDVFLSPTIQHSPSVACNRNKDEIQGPKSRSLTSPIKSADVSPTRTQRPQHPKHAATTGSVSDSNVGQAEISSGPSLQSIVKAGSYPLQRAAGFAGYLNRHSKRMSTLLASESMGYVEKVSGMWKGGKKHYEEPHGIPRDNEMPSIGDDDDNRDGATPADRFRDHFALPPDEKLHATYFGYLQRVLPLYGKIYISDRSFCFRSLLPGTRTKFILPLKDIENVDKEKGFRFGYSGLVITIRGHEEIFFEFNQAENRDDCAITLLQNVETMQYMQDSGLLTMYERESAEMAGAEHRALIQARRGIRSEHDIDMHKAADGGSQSISFDDPRASILNFKPTEPLRITCLTIGSRGDVQPYIALCKGLMAEGHQTKIATHLEFKEWIESHGIEFAPVDGDPAELMRICVENGMFTVSFLKEASSKFRGWIDDLLSSSWRACQNSDILIESPSAMAGIHIAEALRIPYFRAFTMPWTRTRAYPHAFAVPEHKLGGSYNYVTYLMFDTVFWRAISGQVNRWRQKELNLQATGLEKMQPNKVPFLYNFSPSVVVPPLDYSDWIRVTGYWFLDEGANYTPPKDLTDFIANARADGKRLVYVGFGSIVVADSAVLTKTVVASVLKADVRCILSKGWSDRLEKKGANNVEIPLPPEIFQIKSAPHDWLFSQVDAAAHHGGAGTTGASLRAGIPTIIRPFFGDQFFFGQRVEDLGVGVLIKKINVSVFSRALWEATHSERIITKARVLGEQIRKENGVDTAIQSIYRDMEYAKSLIKCKEGKSDDDTLEDSEESWTFIGDDTDPELIKRFYDWESMAHSGTLSDKNMMAWSGSDVASAALSPTRKAA.

4 disordered regions span residues 1-26, 75-107, 123-169, and 185-206; these read MAPDDESKKRATRKSTKRWKEEHQVA, SDEEYDLGKPTRQSSESHINRSSIDQKMGKFEG, RFSS…KDTP, and PSFEMPRKSKDPAEVDDERTSP. Over residues 85 to 99 the composition is skewed to polar residues; the sequence is TRQSSESHINRSSID. Positions 123–133 are enriched in low complexity; sequence RFSSRSKSKSS. Over residues 134 to 143 the composition is skewed to polar residues; that stretch reads NTIARGSRTP. Basic and acidic residues predominate over residues 189 to 206; the sequence is MPRKSKDPAEVDDERTSP. Positions 211–258 constitute a GRAM 1 domain; sequence ERLMEIFKFETPEDVLEEYPCWLMKSVLLQGYMYITTKHICFYAYLPK. A PH domain is found at 262-360; sequence EVVKSGYLSK…WVKALQKIIF (99 aa). Disordered regions lie at residues 444-477, 527-594, 610-671, and 727-759; these read LSTADDSRGSSKRTSFQVSRDRKLHGPSVQPNAP, DLNR…QASA, QHSP…QAEI, and GKKHYEEPHGIPRDNEMPSIGDDDDNRDGATPA. Residues 527 to 537 are compositionally biased toward basic and acidic residues; that stretch reads DLNRLTTEHHR. Composition is skewed to polar residues over residues 539-554, 628-647, and 657-671; these read NSANSISTRRSLSTNR, KSRSLTSPIKSADVSPTRTQ, and TTGSVSDSNVGQAEI. Residues 729 to 742 show a composition bias toward basic and acidic residues; sequence KHYEEPHGIPRDNE. The region spanning 760–826 is the GRAM 2 domain; sequence DRFRDHFALP…KDIENVDKEK (67 aa). The UDP-alpha-D-glucose site is built by S949, R950, D952, A1252, H1254, H1267, G1271, T1272, D1291, and Q1292.

The protein belongs to the glycosyltransferase 28 family.

The protein localises to the cytoplasm. Its subcellular location is the preautophagosomal structure membrane. The enzyme catalyses a sterol + UDP-alpha-D-glucose = a sterol 3-beta-D-glucoside + UDP + H(+). It carries out the reaction ergosterol + UDP-alpha-D-glucose = ergosteryl 3-beta-D-glucoside + UDP + H(+). Its function is as follows. Sterol glycosyltransferase responsible for the glycosylation of ergosterol to form ergosterol-glucoside. The protein is Sterol 3-beta-glucosyltransferase of Sclerotinia sclerotiorum (strain ATCC 18683 / 1980 / Ss-1) (White mold).